The following is a 126-amino-acid chain: Histone H2B 8 (126 aa).

The segment covering 1 to 12 has biased composition (low complexity); that stretch reads MPEPAKSAPAPK. Residues 1–35 form a disordered region; sequence MPEPAKSAPAPKKGSKKAVTKTQKKGDKKRRKTRK. Residues lysine 6 and lysine 13 each carry the N6-acetyllysine modification. Basic residues predominate over residues 13-34; the sequence is KGSKKAVTKTQKKGDKKRRKTR. Residue serine 15 is modified to Phosphoserine. Lysine 16 and lysine 21 each carry N6-acetyllysine. O-linked (GlcNAc) serine glycosylation occurs at serine 113. Residue lysine 121 forms a Glycyl lysine isopeptide (Lys-Gly) (interchain with G-Cter in ubiquitin) linkage.

It belongs to the histone H2B family. The nucleosome is a histone octamer containing two molecules each of H2A, H2B, H3 and H4 assembled in one H3-H4 heterotetramer and two H2A-H2B heterodimers. The octamer wraps approximately 147 bp of DNA. Post-translationally, monoubiquitination of Lys-121 by the BRE1 gives a specific tag for epigenetic transcriptional activation and is also prerequisite for histone H3 'Lys-4' and 'Lys-79' methylation. Phosphorylated on Ser-15 during apoptosis; which facilitates apoptotic chromatin condensation. In terms of processing, glcNAcylation at Ser-113 promotes monoubiquitination of Lys-121. It fluctuates in response to extracellular glucose, and associates with transcribed genes.

It localises to the nucleus. The protein localises to the chromosome. Its function is as follows. Core component of nucleosome. Nucleosomes wrap and compact DNA into chromatin, limiting DNA accessibility to the cellular machineries which require DNA as a template. Histones thereby play a central role in transcription regulation, DNA repair, DNA replication and chromosomal stability. DNA accessibility is regulated via a complex set of post-translational modifications of histones, also called histone code, and nucleosome remodeling. The polypeptide is Histone H2B 8 (H2B-VIII) (Gallus gallus (Chicken)).